The following is a 108-amino-acid chain: UPF0235 protein APE_0182.1 (108 aa).

Belongs to the UPF0235 family.

The polypeptide is UPF0235 protein APE_0182.1 (Aeropyrum pernix (strain ATCC 700893 / DSM 11879 / JCM 9820 / NBRC 100138 / K1)).